The sequence spans 927 residues: Phospholipase D beta 2 (927 aa).

A C2 domain is found at 104–237; sequence PFGKASLKVL…YSGARIEGTY (134 aa). D299 contacts Ca(2+). The PLD phosphodiesterase 1 domain occupies 439 to 474; it reads TIYTHHQKNLIVDADAGGNRRKIVAFVGGLDLCDGR. Catalysis depends on residues H444, K446, and D451. H444 serves as a coordination point for a 1,2-diacyl-sn-glycero-3-phosphate. Positions 480 and 512 each coordinate Ca(2+). A 1,2-diacyl-sn-glycero-3-phosphate is bound by residues Q640 and H778. The region spanning 773-800 is the PLD phosphodiesterase 2 domain; sequence FMIYVHSKGMVVDDEYVVIGSANINQRS. Residues H778, K780, and D785 contribute to the active site. E841 is a binding site for Ca(2+).

It belongs to the phospholipase D family. C2-PLD subfamily. It depends on Ca(2+) as a cofactor. Expressed in stems, and to a lower amount in leaves, flowers and siliques.

The protein resides in the cytoplasm. It localises to the membrane. The enzyme catalyses a 1,2-diacyl-sn-glycero-3-phosphocholine + H2O = a 1,2-diacyl-sn-glycero-3-phosphate + choline + H(+). Its activity is regulated as follows. Inhibited by neomycin. Hydrolyzes glycerol-phospholipids at the terminal phosphodiesteric bond to generate phosphatidic acids (PA). Plays an important role in various cellular processes, including phytohormone action, vesicular trafficking, secretion, cytoskeletal arrangement, meiosis, tumor promotion, pathogenesis, membrane deterioration and senescence. Can use phosphatidylserine or N-acylphosphatidylethanolamine as substrates. The protein is Phospholipase D beta 2 of Arabidopsis thaliana (Mouse-ear cress).